We begin with the raw amino-acid sequence, 545 residues long: Ribulokinase (545 aa).

The protein belongs to the ribulokinase family.

It carries out the reaction D-ribulose + ATP = D-ribulose 5-phosphate + ADP + H(+). It catalyses the reaction L-ribulose + ATP = L-ribulose 5-phosphate + ADP + H(+). It participates in carbohydrate degradation; L-arabinose degradation via L-ribulose; D-xylulose 5-phosphate from L-arabinose (bacterial route): step 2/3. This chain is Ribulokinase, found in Staphylococcus aureus (strain USA300).